A 413-amino-acid chain; its full sequence is Cell division protein FtsZ 2 (413 aa).

GTP-binding positions include 132–134 (GTG), Glu171, Arg175, and Asp218.

This sequence belongs to the FtsZ family. Homodimer. Polymerizes to form a dynamic ring structure in a strictly GTP-dependent manner. Interacts directly with several other division proteins.

Its subcellular location is the cytoplasm. Functionally, essential cell division protein that forms a contractile ring structure (Z ring) at the future cell division site. The regulation of the ring assembly controls the timing and the location of cell division. One of the functions of the FtsZ ring is to recruit other cell division proteins to the septum to produce a new cell wall between the dividing cells. Binds GTP and shows GTPase activity. This Thermococcus kodakarensis (strain ATCC BAA-918 / JCM 12380 / KOD1) (Pyrococcus kodakaraensis (strain KOD1)) protein is Cell division protein FtsZ 2.